The following is a 1043-amino-acid chain: V(D)J recombination-activating protein 1 (1043 aa).

The tract at residues 1 to 288 (MAASFPPTLG…LAVDFPEHFV (288 aa)) is interaction with importin alpha-1. The span at 40 to 54 (KTPEEAQKEKKDSFE) shows a compositional bias: basic and acidic residues. Residues 40–80 (KTPEEAQKEKKDSFEGKPSLEQSPAVLDKADGQKPVPTQPL) are disordered. K234 is covalently cross-linked (Glycyl lysine isopeptide (Lys-Gly) (interchain with G-Cter in ubiquitin)). Zn(2+)-binding residues include C269, H273, C293, C296, H298, C308, H310, C313, C316, C328, C331, C358, C363, H375, and H379. The RING-type zinc-finger motif lies at 293–332 (CQICEHILADPVETNCKHVFCRVCILRCLKVMGSYCPSCR). The RAG1-type zinc finger occupies 354 to 383 (LMVKCPAKECNEEVSLEKYNHHISSHKESK). The NBD DNA-binding region spans 392–459 (GGRPRQHLLS…QADELEAIMQ (68 aa)). 3 residues coordinate a divalent metal cation: D603, D711, and E965.

Belongs to the RAG1 family. In terms of assembly, homodimer. Component of the RAG complex composed of core components RAG1 and RAG2, and associated component HMGB1 or HMGB2. Interacts with DCAF1, leading to recruitment of the CUL4A-RBX1-DDB1-DCAF1/VPRBP complex to ubiquitinate proteins and limit error-prone repair during V(D)J recombination. The cofactor is Mg(2+). Mn(2+) is required as a cofactor. In terms of processing, autoubiquitinated in the presence of CDC34/UBCH3. As to expression, maturing lymphoid cells.

The protein resides in the nucleus. The enzyme catalyses S-ubiquitinyl-[E2 ubiquitin-conjugating enzyme]-L-cysteine + [acceptor protein]-L-lysine = [E2 ubiquitin-conjugating enzyme]-L-cysteine + N(6)-ubiquitinyl-[acceptor protein]-L-lysine.. In terms of biological role, catalytic component of the RAG complex, a multiprotein complex that mediates the DNA cleavage phase during V(D)J recombination. V(D)J recombination assembles a diverse repertoire of immunoglobulin and T-cell receptor genes in developing B and T-lymphocytes through rearrangement of different V (variable), in some cases D (diversity), and J (joining) gene segments. In the RAG complex, RAG1 mediates the DNA-binding to the conserved recombination signal sequences (RSS) and catalyzes the DNA cleavage activities by introducing a double-strand break between the RSS and the adjacent coding segment. RAG2 is not a catalytic component but is required for all known catalytic activities. DNA cleavage occurs in 2 steps: a first nick is introduced in the top strand immediately upstream of the heptamer, generating a 3'-hydroxyl group that can attack the phosphodiester bond on the opposite strand in a direct transesterification reaction, thereby creating 4 DNA ends: 2 hairpin coding ends and 2 blunt, 5'-phosphorylated ends. The chromatin structure plays an essential role in the V(D)J recombination reactions and the presence of histone H3 trimethylated at 'Lys-4' (H3K4me3) stimulates both the nicking and haipinning steps. The RAG complex also plays a role in pre-B cell allelic exclusion, a process leading to expression of a single immunoglobulin heavy chain allele to enforce clonality and monospecific recognition by the B-cell antigen receptor (BCR) expressed on individual B-lymphocytes. The introduction of DNA breaks by the RAG complex on one immunoglobulin allele induces ATM-dependent repositioning of the other allele to pericentromeric heterochromatin, preventing accessibility to the RAG complex and recombination of the second allele. In addition to its endonuclease activity, RAG1 also acts as an E3 ubiquitin-protein ligase that mediates monoubiquitination of histone H3. Histone H3 monoubiquitination is required for the joining step of V(D)J recombination. Mediates polyubiquitination of KPNA1. The sequence is that of V(D)J recombination-activating protein 1 (RAG1) from Homo sapiens (Human).